A 552-amino-acid chain; its full sequence is MEKVKQTIRAPRGTELQTKGWVQEAALRMLMNNLDPEVAEKPEELVVYGGIGRAARNWESYNAIVDSLKTLESDETLLVQSGKPVAIFKSHEDAPRVLLANSNLVPKWANWNHFRELEKKGLMMYGQMTAGSWIYIGTQGILQGTYETFGEAARQHFGGSLKGTLTLTAGLGGMGGAQPLAVTMNGGVVIAIDVDKRSIDRRIEKRYCDMYTESLEEALTVANEYKEKKEPISIGLLGNAAEILPELVKRNITPDLVTDQTSAHDPLNGYIPVGYTLEEAAKLREEDPERYVQLSKESMTKHVEAMLAMQAKGAITFDYGNNIRQVAFDEGLKNAFDFPGFVPAFIRPLFCEGKGPFRWVALSGDPEDIYKTDEVILREFADNEHLCNWIRMARQQVEFQGLPSRICWLGYGERAKFGRIINEMVANGELSAPIVIGRDHLDCGSVASPNRETEAMKDGSDAVADWPILNALINSVNGASWVSVHHGGGVGMGYSLHAGMVIVADGTEAAAKRIERVLTSDPGMGVVRHVDAGYDLAVETAKEKGVNIPMMK.

NAD(+) is bound by residues 49–50 (GG), Q127, 173–175 (GMG), D193, 239–240 (NA), 260–264 (QTSAH), 270–271 (YI), and Y319. C407 is a catalytic residue. G489 contacts NAD(+).

This sequence belongs to the urocanase family. It depends on NAD(+) as a cofactor.

The protein localises to the cytoplasm. It catalyses the reaction 4-imidazolone-5-propanoate = trans-urocanate + H2O. It functions in the pathway amino-acid degradation; L-histidine degradation into L-glutamate; N-formimidoyl-L-glutamate from L-histidine: step 2/3. Its function is as follows. Catalyzes the conversion of urocanate to 4-imidazolone-5-propionate. This chain is Urocanate hydratase, found in Bacillus cereus (strain ATCC 10987 / NRS 248).